A 217-amino-acid polypeptide reads, in one-letter code: Oxygen-evolving enhancer protein 3-1, chloroplastic (217 aa).

The transit peptide at 1 to 68 (MAQAMASMTG…GGALSQAARA (68 aa)) directs the protein to the chloroplast.

The protein belongs to the PsbQ family.

The protein localises to the plastid. It is found in the chloroplast thylakoid membrane. The chain is Oxygen-evolving enhancer protein 3-1, chloroplastic (PSBQ1) from Zea mays (Maize).